A 213-amino-acid polypeptide reads, in one-letter code: Putative manganese efflux pump MntP (213 aa).

A run of 6 helical transmembrane segments spans residues 3–23, 36–56, 67–87, 130–150, 152–172, and 187–207; these read ILSI…VSVA, ALKV…IGWG, AFDH…MIFE, LAIA…FLGI, IVQT…LGVI, and IVGG…HTGI.

This sequence belongs to the MntP (TC 9.B.29) family.

It localises to the cell membrane. In terms of biological role, probably functions as a manganese efflux pump. The polypeptide is Putative manganese efflux pump MntP (Clostridium perfringens (strain ATCC 13124 / DSM 756 / JCM 1290 / NCIMB 6125 / NCTC 8237 / Type A)).